The primary structure comprises 228 residues: DNA-binding response regulator MtrA (228 aa).

One can recognise a Response regulatory domain in the interval 7 to 120; that stretch reads RILVVDDDPS…ELVARVRARL (114 aa). 4-aspartylphosphate is present on Asp-56. A DNA-binding region (ompR/PhoB-type) is located at residues 128 to 227; that stretch reads AEMLSIGDVE…VRGVGYKAGP (100 aa).

Probably a monomer when inactive, phosphorylation may permit it to oligomerize. The monomeric form does not seem to be phosphorylated. Post-translationally, phosphorylated by MtrB.

It is found in the cytoplasm. In terms of biological role, member of the two-component regulatory system MtrA/MtrB, responding to environmental signals. Controls expression of a number of genes including dnaA, ripA, fbpB and probably itself. Probably plays a role in cell division. In Mycolicibacterium smegmatis (strain ATCC 700084 / mc(2)155) (Mycobacterium smegmatis), this protein is DNA-binding response regulator MtrA (mtrA).